A 238-amino-acid chain; its full sequence is Small ribosomal subunit protein uS2 (238 aa).

The protein belongs to the universal ribosomal protein uS2 family.

This Actinobacillus pleuropneumoniae serotype 5b (strain L20) protein is Small ribosomal subunit protein uS2.